A 181-amino-acid chain; its full sequence is TATA-box-binding protein (181 aa).

Tandem repeats lie at residues 7-83 and 98-173.

Belongs to the TBP family.

Functionally, general factor that plays a role in the activation of archaeal genes transcribed by RNA polymerase. Binds specifically to the TATA box promoter element which lies close to the position of transcription initiation. This is TATA-box-binding protein from Methanococcus maripaludis (strain DSM 14266 / JCM 13030 / NBRC 101832 / S2 / LL).